We begin with the raw amino-acid sequence, 499 residues long: Glycerol kinase (499 aa).

Thr17 is a binding site for ADP. ATP contacts are provided by Thr17, Thr18, and Ser19. Residue Thr17 coordinates sn-glycerol 3-phosphate. Arg21 is a binding site for ADP. The sn-glycerol 3-phosphate site is built by Arg87, Glu88, Tyr139, and Asp243. Residues Arg87, Glu88, Tyr139, Asp243, and Gln244 each coordinate glycerol. Residues Thr265 and Gly308 each coordinate ADP. ATP-binding residues include Thr265, Gly308, Gln312, and Gly409. The ADP site is built by Gly409 and Asn413.

This sequence belongs to the FGGY kinase family.

It carries out the reaction glycerol + ATP = sn-glycerol 3-phosphate + ADP + H(+). It participates in polyol metabolism; glycerol degradation via glycerol kinase pathway; sn-glycerol 3-phosphate from glycerol: step 1/1. With respect to regulation, inhibited by fructose 1,6-bisphosphate (FBP). In terms of biological role, key enzyme in the regulation of glycerol uptake and metabolism. Catalyzes the phosphorylation of glycerol to yield sn-glycerol 3-phosphate. The sequence is that of Glycerol kinase from Pseudomonas putida (strain ATCC 700007 / DSM 6899 / JCM 31910 / BCRC 17059 / LMG 24140 / F1).